We begin with the raw amino-acid sequence, 256 residues long: Ubiquinone/menaquinone biosynthesis C-methyltransferase UbiE (256 aa).

Residues 1–12 (MNDQRKGDHAEP) show a composition bias toward basic and acidic residues. Residues 1 to 23 (MNDQRKGDHAEPTTHFGYQDVPE) form a disordered region. S-adenosyl-L-methionine-binding positions include Thr-79, Asp-100, and 128–129 (DA).

Belongs to the class I-like SAM-binding methyltransferase superfamily. MenG/UbiE family.

The catalysed reaction is a 2-demethylmenaquinol + S-adenosyl-L-methionine = a menaquinol + S-adenosyl-L-homocysteine + H(+). The enzyme catalyses a 2-methoxy-6-(all-trans-polyprenyl)benzene-1,4-diol + S-adenosyl-L-methionine = a 5-methoxy-2-methyl-3-(all-trans-polyprenyl)benzene-1,4-diol + S-adenosyl-L-homocysteine + H(+). It participates in quinol/quinone metabolism; menaquinone biosynthesis; menaquinol from 1,4-dihydroxy-2-naphthoate: step 2/2. Its pathway is cofactor biosynthesis; ubiquinone biosynthesis. Functionally, methyltransferase required for the conversion of demethylmenaquinol (DMKH2) to menaquinol (MKH2) and the conversion of 2-polyprenyl-6-methoxy-1,4-benzoquinol (DDMQH2) to 2-polyprenyl-3-methyl-6-methoxy-1,4-benzoquinol (DMQH2). This chain is Ubiquinone/menaquinone biosynthesis C-methyltransferase UbiE, found in Pseudomonas putida (strain GB-1).